A 411-amino-acid chain; its full sequence is Nuclear receptor subfamily 2 group F member 1-A (411 aa).

The tract at residues 1-68 (MAMVVSVWRD…AGDKGSQNSG (68 aa)) is disordered. Over residues 24–46 (NPAAQPAREQQQAASAAPHTPQT) the composition is skewed to low complexity. Residues 73–148 (HIECVVCGDK…VGMRREAVQR (76 aa)) constitute a DNA-binding region (nuclear receptor). 2 NR C4-type zinc fingers span residues 76-96 (CVVC…CEGC) and 112-136 (CRAN…LKKC). An NR LBD domain is found at 174-400 (YLSGYISLLL…TLIRDMLLSG (227 aa)).

It belongs to the nuclear hormone receptor family. NR2 subfamily. In terms of tissue distribution, first expressed in 11-12 hour embryos. In the rostral brain of 13 hour embryos, expressed within the anterior half of the midbrain and the posterior part of the diencephalon. In the presumptive hindbrain, expressed in a segment-like stripe in the anterior region, resembling the presumptive rhombomere units of the hindbrain. Also detected in the intermediate mesoderm, posterior to the first somite. As somitogenesis proceeds, expression extends posteriorly and flanks the 10 most anterior somites. Expression changes extensively both in level and expansion of domains between 13 and 20 hours. In the rostral brain, expression extends to include a major part of the diencephalon and a caudal portion of the telencephalon. Within the hindbrain, strongly expressed in the two most anterior rhombomeres, and a lower but uniform expression is seen to extend throughout rhombomere 7. In 28 hour embryos, higher and more uniform expression is seen in both rostral and hindbrain areas. Also expressed in the retina of the eye.

It is found in the nucleus. In terms of biological role, putative transcription factor that is required in photoreceptor cells precursors during eye development. This chain is Nuclear receptor subfamily 2 group F member 1-A (nr2f1a), found in Danio rerio (Zebrafish).